A 428-amino-acid polypeptide reads, in one-letter code: Adenylosuccinate synthetase (428 aa).

Residues 12-18 and 40-42 each bind GTP; these read GDEGKGK and GHT. The active-site Proton acceptor is aspartate 13. Mg(2+) is bound by residues aspartate 13 and glycine 40. Residues 13 to 16, 38 to 41, threonine 128, arginine 142, glutamine 222, threonine 237, and arginine 301 each bind IMP; these read DEGK and NAGH. Histidine 41 serves as the catalytic Proton donor. 297–303 serves as a coordination point for substrate; that stretch reads VNTGRAR. GTP-binding positions include arginine 303, 329 to 331, and 411 to 413; these read KLD and STS.

The protein belongs to the adenylosuccinate synthetase family. As to quaternary structure, homodimer. Mg(2+) is required as a cofactor.

It localises to the cytoplasm. It carries out the reaction IMP + L-aspartate + GTP = N(6)-(1,2-dicarboxyethyl)-AMP + GDP + phosphate + 2 H(+). It participates in purine metabolism; AMP biosynthesis via de novo pathway; AMP from IMP: step 1/2. Functionally, plays an important role in the de novo pathway of purine nucleotide biosynthesis. Catalyzes the first committed step in the biosynthesis of AMP from IMP. This Caulobacter sp. (strain K31) protein is Adenylosuccinate synthetase.